We begin with the raw amino-acid sequence, 301 residues long: Probable alpha-L-glutamate ligase 1 (301 aa).

Residues 104-287 (LQLLSRKGIG…VTEPIVEYIE (184 aa)) form the ATP-grasp domain. Residues lysine 141, 178-179 (EY), aspartate 187, and 211-213 (RSN) contribute to the ATP site. Mg(2+)-binding residues include aspartate 248, glutamate 260, and asparagine 262. Residues aspartate 248, glutamate 260, and asparagine 262 each coordinate Mn(2+).

Belongs to the RimK family. Requires Mg(2+) as cofactor. It depends on Mn(2+) as a cofactor.

This is Probable alpha-L-glutamate ligase 1 from Shewanella sp. (strain W3-18-1).